Consider the following 346-residue polypeptide: Porphobilinogen deaminase (346 aa).

The residue at position 242 (C242) is an S-(dipyrrolylmethanemethyl)cysteine. A disordered region spans residues 317–346 (ATEPGARSGTGAVRPPETDLSNPSPMENPQ). Over residues 335 to 346 (DLSNPSPMENPQ) the composition is skewed to polar residues.

This sequence belongs to the HMBS family. As to quaternary structure, monomer. Dipyrromethane serves as cofactor.

It catalyses the reaction 4 porphobilinogen + H2O = hydroxymethylbilane + 4 NH4(+). Its pathway is porphyrin-containing compound metabolism; protoporphyrin-IX biosynthesis; coproporphyrinogen-III from 5-aminolevulinate: step 2/4. Tetrapolymerization of the monopyrrole PBG into the hydroxymethylbilane pre-uroporphyrinogen in several discrete steps. The chain is Porphobilinogen deaminase from Nocardia farcinica (strain IFM 10152).